We begin with the raw amino-acid sequence, 658 residues long: Non-reducing end beta-L-arabinofuranosidase (658 aa).

Residues histidine 142, 192–194 (DGH), histidine 270, and glutamate 322 each bind beta-L-arabinofuranose. Glutamate 322 acts as the Proton donor/acceptor in catalysis. Glutamate 338, cysteine 340, cysteine 417, and cysteine 418 together coordinate Zn(2+). The Nucleophile; S-glycosyl-cysteine intermediate role is filled by cysteine 417.

The protein belongs to the glycosyl hydrolase 127 family. As to quaternary structure, homodimer in solution. Zn(2+) is required as a cofactor.

The catalysed reaction is beta-L-arabinofuranosyl-(1-&gt;2)-beta-L-arabinofuranose + H2O = 2 beta-L-arabinofuranose. Its activity is regulated as follows. Strongly inhibited in the presence of thiol modifiers, suggesting a crucial role for cysteine residues in catalysis. Slightly inhibited by EDTA. Beta-L-arabinofuranosidase that removes the beta-L-arabinofuranose residue from the non-reducing end of various substrates, including beta-L-arabinofuranosyl-hydroxyproline (Ara-Hyp), Ara-beta-1,2-Ara-beta-Hyp (Ara(2)-Hyp), Ara-beta-1,2-Ara-beta-1,2-Ara-beta-Hyp (Ara(3)-Hyp), and beta-L-arabinofuranosyl-(1-&gt;2)-1-O-methyl-beta-L-arabinofuranose. In the presence of 1-alkanols, shows transglycosylation activity, retaining the anomeric configuration of the arabinofuranose residue. The protein is Non-reducing end beta-L-arabinofuranosidase of Bifidobacterium longum subsp. longum (strain ATCC 15707 / DSM 20219 / JCM 1217 / NCTC 11818 / E194b).